The following is a 207-amino-acid chain: Minor capsid protein P11 (207 aa).

A hydrophobic region spans residues 7-23 (VKVVAILAVLFLVYKLW). Residues 63–82 (ETDAEDDDIYTGETDDMYDG) are disordered.

Interacts with the major capsid protein.

It localises to the virion. Its function is as follows. One of the minor capsid proteins that constitute a network internal to the major capsid proteins and outside the lipid membrane. The minor capsid proteins glue and stabilize the capsomers. the p11 zip protein binds together the neighboring symmetrons. The polypeptide is Minor capsid protein P11 (Paramecium bursaria Chlorella virus 1 (PBCV-1)).